Consider the following 554-residue polypeptide: Hydroxylamine reductase (554 aa).

Positions 3, 6, 18, and 25 each coordinate [2Fe-2S] cluster. His-252, Glu-276, Cys-320, Cys-408, Cys-436, Cys-461, Glu-495, and Lys-497 together coordinate hybrid [4Fe-2O-2S] cluster. Cys-408 carries the post-translational modification Cysteine persulfide.

This sequence belongs to the HCP family. [2Fe-2S] cluster serves as cofactor. The cofactor is hybrid [4Fe-2O-2S] cluster.

The protein resides in the cytoplasm. The enzyme catalyses A + NH4(+) + H2O = hydroxylamine + AH2 + H(+). Catalyzes the reduction of hydroxylamine to form NH(3) and H(2)O. The polypeptide is Hydroxylamine reductase (Shewanella baltica (strain OS185)).